Reading from the N-terminus, the 425-residue chain is Glutamate-1-semialdehyde 2,1-aminomutase (425 aa).

Lysine 264 is modified (N6-(pyridoxal phosphate)lysine).

It belongs to the class-III pyridoxal-phosphate-dependent aminotransferase family. HemL subfamily. In terms of assembly, homodimer. The cofactor is pyridoxal 5'-phosphate.

It is found in the cytoplasm. It catalyses the reaction (S)-4-amino-5-oxopentanoate = 5-aminolevulinate. Its pathway is porphyrin-containing compound metabolism; protoporphyrin-IX biosynthesis; 5-aminolevulinate from L-glutamyl-tRNA(Glu): step 2/2. This Hydrogenobaculum sp. (strain Y04AAS1) protein is Glutamate-1-semialdehyde 2,1-aminomutase.